The primary structure comprises 171 residues: MAEKRNIFLVGPMGAGKSTIGRHLAQMLHLDFHDSDQEIESRTGADIAWVFDVEGEEGFRVRETQVVADLTEKQGIVLATGGGSIQSKEIRNNLSARGIVVYLETTIDKQVARTQRDKRRPLLQVDDPREVLENLAATRNPLYEEIADVIVKTDEQSAKVVANQIIEQLGF.

Residue Gly14–Thr19 participates in ATP binding. Ser18 provides a ligand contact to Mg(2+). Substrate is bound by residues Asp36, Arg60, and Gly82. An ATP-binding site is contributed by Arg120. Arg139 lines the substrate pocket. Gln156 contributes to the ATP binding site.

This sequence belongs to the shikimate kinase family. In terms of assembly, monomer. The cofactor is Mg(2+).

Its subcellular location is the cytoplasm. The catalysed reaction is shikimate + ATP = 3-phosphoshikimate + ADP + H(+). The protein operates within metabolic intermediate biosynthesis; chorismate biosynthesis; chorismate from D-erythrose 4-phosphate and phosphoenolpyruvate: step 5/7. Catalyzes the specific phosphorylation of the 3-hydroxyl group of shikimic acid using ATP as a cosubstrate. In Shewanella sediminis (strain HAW-EB3), this protein is Shikimate kinase.